The sequence spans 353 residues: Photosystem II D2 protein (353 aa).

T2 bears the N-acetylthreonine mark. T2 carries the post-translational modification Phosphothreonine. A helical transmembrane segment spans residues 41–61 (CAYFALGGWFTGTTFVTSWYT). Residue H118 coordinates chlorophyll a. A helical transmembrane segment spans residues 125-141 (GFMLRQFELARSVQLRP). Q130 and N143 together coordinate pheophytin a. The helical transmembrane segment at 153 to 166 (VFVSVFLIYPLGQS) threads the bilayer. H198 provides a ligand contact to chlorophyll a. Residues 208–228 (AALLCAIHGATVENTLFEDGD) traverse the membrane as a helical segment. H215 and F262 together coordinate a plastoquinone. H215 contributes to the Fe cation binding site. H269 contacts Fe cation. The chain crosses the membrane as a helical span at residues 279 to 295 (GLWMSALGVVGLALNLR).

The protein belongs to the reaction center PufL/M/PsbA/D family. As to quaternary structure, PSII is composed of 1 copy each of membrane proteins PsbA, PsbB, PsbC, PsbD, PsbE, PsbF, PsbH, PsbI, PsbJ, PsbK, PsbL, PsbM, PsbT, PsbX, PsbY, PsbZ, Psb30/Ycf12, at least 3 peripheral proteins of the oxygen-evolving complex and a large number of cofactors. It forms dimeric complexes. It depends on The D1/D2 heterodimer binds P680, chlorophylls that are the primary electron donor of PSII, and subsequent electron acceptors. It shares a non-heme iron and each subunit binds pheophytin, quinone, additional chlorophylls, carotenoids and lipids. There is also a Cl(-1) ion associated with D1 and D2, which is required for oxygen evolution. The PSII complex binds additional chlorophylls, carotenoids and specific lipids. as a cofactor.

It localises to the plastid. It is found in the chloroplast thylakoid membrane. It catalyses the reaction 2 a plastoquinone + 4 hnu + 2 H2O = 2 a plastoquinol + O2. Its function is as follows. Photosystem II (PSII) is a light-driven water:plastoquinone oxidoreductase that uses light energy to abstract electrons from H(2)O, generating O(2) and a proton gradient subsequently used for ATP formation. It consists of a core antenna complex that captures photons, and an electron transfer chain that converts photonic excitation into a charge separation. The D1/D2 (PsbA/PsbD) reaction center heterodimer binds P680, the primary electron donor of PSII as well as several subsequent electron acceptors. D2 is needed for assembly of a stable PSII complex. The sequence is that of Photosystem II D2 protein from Amborella trichopoda.